We begin with the raw amino-acid sequence, 178 residues long: CDP-archaeol synthase (178 aa).

The next 5 helical transmembrane spans lie at 3 to 23 (LLLL…ANAV), 56 to 76 (FFGI…VILY), 91 to 111 (IILS…GSFI), 131 to 151 (FIIF…NIIV), and 152 to 172 (LLLV…YKLH).

This sequence belongs to the CDP-archaeol synthase family. It depends on Mg(2+) as a cofactor.

It localises to the cell membrane. It carries out the reaction 2,3-bis-O-(geranylgeranyl)-sn-glycerol 1-phosphate + CTP + H(+) = CDP-2,3-bis-O-(geranylgeranyl)-sn-glycerol + diphosphate. The protein operates within membrane lipid metabolism; glycerophospholipid metabolism. Catalyzes the formation of CDP-2,3-bis-(O-geranylgeranyl)-sn-glycerol (CDP-archaeol) from 2,3-bis-(O-geranylgeranyl)-sn-glycerol 1-phosphate (DGGGP) and CTP. This reaction is the third ether-bond-formation step in the biosynthesis of archaeal membrane lipids. The protein is CDP-archaeol synthase of Methanococcus maripaludis (strain DSM 14266 / JCM 13030 / NBRC 101832 / S2 / LL).